Reading from the N-terminus, the 63-residue chain is Cytochrome c oxidase subunit 7C, mitochondrial (63 aa).

The transit peptide at 1–16 (MLGQSIRRFTTSVVRR) directs the protein to the mitochondrion. Residues 17–33 (SHYEEGPGKNLPFSVEN) lie on the Mitochondrial matrix side of the membrane. At K25 the chain carries N6-acetyllysine; alternate. At K25 the chain carries N6-succinyllysine; alternate. Residues 34–60 (KWRLLAMMTLYFGSGFAAPFFIVRHQL) form a helical membrane-spanning segment. At 61–63 (LKK) the chain is on the mitochondrial intermembrane side.

Belongs to the cytochrome c oxidase VIIc family. As to quaternary structure, component of the cytochrome c oxidase (complex IV, CIV), a multisubunit enzyme composed of 14 subunits. The complex is composed of a catalytic core of 3 subunits MT-CO1, MT-CO2 and MT-CO3, encoded in the mitochondrial DNA, and 11 supernumerary subunits COX4I, COX5A, COX5B, COX6A, COX6B, COX6C, COX7A, COX7B, COX7C, COX8 and NDUFA4, which are encoded in the nuclear genome. The complex exists as a monomer or a dimer and forms supercomplexes (SCs) in the inner mitochondrial membrane with NADH-ubiquinone oxidoreductase (complex I, CI) and ubiquinol-cytochrome c oxidoreductase (cytochrome b-c1 complex, complex III, CIII), resulting in different assemblies (supercomplex SCI(1)III(2)IV(1) and megacomplex MCI(2)III(2)IV(2)). Interacts with RAB5IF.

It is found in the mitochondrion inner membrane. It functions in the pathway energy metabolism; oxidative phosphorylation. Component of the cytochrome c oxidase, the last enzyme in the mitochondrial electron transport chain which drives oxidative phosphorylation. The respiratory chain contains 3 multisubunit complexes succinate dehydrogenase (complex II, CII), ubiquinol-cytochrome c oxidoreductase (cytochrome b-c1 complex, complex III, CIII) and cytochrome c oxidase (complex IV, CIV), that cooperate to transfer electrons derived from NADH and succinate to molecular oxygen, creating an electrochemical gradient over the inner membrane that drives transmembrane transport and the ATP synthase. Cytochrome c oxidase is the component of the respiratory chain that catalyzes the reduction of oxygen to water. Electrons originating from reduced cytochrome c in the intermembrane space (IMS) are transferred via the dinuclear copper A center (CU(A)) of subunit 2 and heme A of subunit 1 to the active site in subunit 1, a binuclear center (BNC) formed by heme A3 and copper B (CU(B)). The BNC reduces molecular oxygen to 2 water molecules using 4 electrons from cytochrome c in the IMS and 4 protons from the mitochondrial matrix. This is Cytochrome c oxidase subunit 7C, mitochondrial (COX7C) from Sus scrofa (Pig).